Reading from the N-terminus, the 255-residue chain is Small ribosomal subunit protein uS2 (255 aa).

The interval 231 to 255 (RLQTGAEEEFSTEGEEVVEETPAEA) is disordered. The segment covering 236–255 (AEEEFSTEGEEVVEETPAEA) has biased composition (acidic residues).

It belongs to the universal ribosomal protein uS2 family.

The sequence is that of Small ribosomal subunit protein uS2 from Geobacter sp. (strain M21).